A 286-amino-acid polypeptide reads, in one-letter code: Phosphatidylserine decarboxylase proenzyme (286 aa).

Catalysis depends on charge relay system; for autoendoproteolytic cleavage activity residues Asp90, His147, and Ser252. Ser252 acts as the Schiff-base intermediate with substrate; via pyruvic acid; for decarboxylase activity in catalysis. Ser252 is subject to Pyruvic acid (Ser); by autocatalysis.

The protein belongs to the phosphatidylserine decarboxylase family. PSD-B subfamily. Prokaryotic type I sub-subfamily. Heterodimer of a large membrane-associated beta subunit and a small pyruvoyl-containing alpha subunit. Requires pyruvate as cofactor. Post-translationally, is synthesized initially as an inactive proenzyme. Formation of the active enzyme involves a self-maturation process in which the active site pyruvoyl group is generated from an internal serine residue via an autocatalytic post-translational modification. Two non-identical subunits are generated from the proenzyme in this reaction, and the pyruvate is formed at the N-terminus of the alpha chain, which is derived from the carboxyl end of the proenzyme. The autoendoproteolytic cleavage occurs by a canonical serine protease mechanism, in which the side chain hydroxyl group of the serine supplies its oxygen atom to form the C-terminus of the beta chain, while the remainder of the serine residue undergoes an oxidative deamination to produce ammonia and the pyruvoyl prosthetic group on the alpha chain. During this reaction, the Ser that is part of the protease active site of the proenzyme becomes the pyruvoyl prosthetic group, which constitutes an essential element of the active site of the mature decarboxylase.

The protein localises to the cell membrane. It carries out the reaction a 1,2-diacyl-sn-glycero-3-phospho-L-serine + H(+) = a 1,2-diacyl-sn-glycero-3-phosphoethanolamine + CO2. It functions in the pathway phospholipid metabolism; phosphatidylethanolamine biosynthesis; phosphatidylethanolamine from CDP-diacylglycerol: step 2/2. Its function is as follows. Catalyzes the formation of phosphatidylethanolamine (PtdEtn) from phosphatidylserine (PtdSer). This is Phosphatidylserine decarboxylase proenzyme from Pseudomonas fluorescens (strain Pf0-1).